The following is a 59-amino-acid chain: UPF0434 protein Pnec_0311 (59 aa).

This sequence belongs to the UPF0434 family.

The sequence is that of UPF0434 protein Pnec_0311 from Polynucleobacter necessarius subsp. necessarius (strain STIR1).